We begin with the raw amino-acid sequence, 209 residues long: Interleukin-6 (209 aa).

Residues 1-26 (RFTSAFSPVAFSLGLLLVMATAFPTP) form the signal peptide. The tract at residues 28 to 47 (PVGGESQADATSNRPPLTSP) is disordered. Cysteine 69 and cysteine 75 are oxidised to a cystine. Phosphoserine is present on serine 78. Cysteine 98 and cysteine 108 are oxidised to a cystine.

It belongs to the IL-6 superfamily. As to quaternary structure, component of a hexamer of two molecules each of IL6, IL6R and IL6ST; first binds to IL6R to associate with the signaling subunit IL6ST. Interacts with IL6R (via the N-terminal ectodomain); this interaction may be affected by IL6R-binding with SORL1, hence decreasing IL6 cis signaling. Interacts with SORL1 (via the N-terminal ectodomain); this interaction leads to IL6 internalization and lysosomal degradation. May form a trimeric complex with the soluble SORL1 ectodomain and soluble IL6R receptor; this interaction might stabilize circulating IL6, hence promoting IL6 trans signaling.

It is found in the secreted. In terms of biological role, cytokine with a wide variety of biological functions in immunity, tissue regeneration, and metabolism. Binds to IL6R, then the complex associates to the signaling subunit IL6ST/gp130 to trigger the intracellular IL6-signaling pathway. The interaction with the membrane-bound IL6R and IL6ST stimulates 'classic signaling', whereas the binding of IL6 and soluble IL6R to IL6ST stimulates 'trans-signaling'. Alternatively, 'cluster signaling' occurs when membrane-bound IL6:IL6R complexes on transmitter cells activate IL6ST receptors on neighboring receiver cells. Functionally, IL6 is a potent inducer of the acute phase response. Rapid production of IL6 contributes to host defense during infection and tissue injury, but excessive IL6 synthesis is involved in disease pathology. In the innate immune response, is synthesized by myeloid cells, such as macrophages and dendritic cells, upon recognition of pathogens through toll-like receptors (TLRs) at the site of infection or tissue injury. In the adaptive immune response, is required for the differentiation of B cells into immunoglobulin-secreting cells. Plays a major role in the differentiation of CD4(+) T cell subsets. Essential factor for the development of T follicular helper (Tfh) cells that are required for the induction of germinal-center formation. Required to drive naive CD4(+) T cells to the Th17 lineage. Also required for proliferation of myeloma cells and the survival of plasmablast cells. Acts as an essential factor in bone homeostasis and on vessels directly or indirectly by induction of VEGF, resulting in increased angiogenesis activity and vascular permeability. Induces, through 'trans-signaling' and synergistically with IL1B and TNF, the production of VEGF. Involved in metabolic controls, is discharged into the bloodstream after muscle contraction increasing lipolysis and improving insulin resistance. 'Trans-signaling' in central nervous system also regulates energy and glucose homeostasis. Mediates, through GLP-1, crosstalk between insulin-sensitive tissues, intestinal L cells and pancreatic islets to adapt to changes in insulin demand. Also acts as a myokine. Plays a protective role during liver injury, being required for maintenance of tissue regeneration. Also has a pivotal role in iron metabolism by regulating HAMP/hepcidin expression upon inflammation or bacterial infection. Through activation of IL6ST-YAP-NOTCH pathway, induces inflammation-induced epithelial regeneration. The protein is Interleukin-6 (IL6) of Phoca vitulina (Harbor seal).